Consider the following 588-residue polypeptide: Adenine deaminase (588 aa).

It belongs to the metallo-dependent hydrolases superfamily. Adenine deaminase family. Homodimer. Mn(2+) serves as cofactor.

The catalysed reaction is adenine + H2O + H(+) = hypoxanthine + NH4(+). The protein is Adenine deaminase of Escherichia coli O45:K1 (strain S88 / ExPEC).